A 223-amino-acid polypeptide reads, in one-letter code: Uridylate kinase (223 aa).

G9 to S10 is an ATP binding site. G43 provides a ligand contact to UMP. Positions 44 and 48 each coordinate ATP. UMP is bound by residues D65 and T112 to T118. The ATP site is built by T137, N138, Y143, and D146.

It belongs to the UMP kinase family. As to quaternary structure, homohexamer.

It localises to the cytoplasm. It catalyses the reaction UMP + ATP = UDP + ADP. It participates in pyrimidine metabolism; CTP biosynthesis via de novo pathway; UDP from UMP (UMPK route): step 1/1. Its activity is regulated as follows. Inhibited by UTP. Catalyzes the reversible phosphorylation of UMP to UDP. The polypeptide is Uridylate kinase (Methanopyrus kandleri (strain AV19 / DSM 6324 / JCM 9639 / NBRC 100938)).